Consider the following 800-residue polypeptide: Phenylalanine--tRNA ligase beta subunit (800 aa).

The tRNA-binding domain occupies 39–154 (SKDIKNLVVG…TEVEPGTDAL (116 aa)). The 76-residue stretch at 408 to 483 (SFVTPIDITA…RIYGYDEIPS (76 aa)) folds into the B5 domain. 4 residues coordinate Mg(2+): aspartate 461, aspartate 467, glutamate 470, and glutamate 471. The region spanning 708–800 (PKFPGVTRDI…ALQAQGATIR (93 aa)) is the FDX-ACB domain.

The protein belongs to the phenylalanyl-tRNA synthetase beta subunit family. Type 1 subfamily. In terms of assembly, tetramer of two alpha and two beta subunits. It depends on Mg(2+) as a cofactor.

It is found in the cytoplasm. The catalysed reaction is tRNA(Phe) + L-phenylalanine + ATP = L-phenylalanyl-tRNA(Phe) + AMP + diphosphate + H(+). The chain is Phenylalanine--tRNA ligase beta subunit from Staphylococcus haemolyticus (strain JCSC1435).